Reading from the N-terminus, the 116-residue chain is Large ribosomal subunit protein bL17 (116 aa).

Belongs to the bacterial ribosomal protein bL17 family. In terms of assembly, part of the 50S ribosomal subunit. Contacts protein L32.

This is Large ribosomal subunit protein bL17 from Prochlorococcus marinus (strain MIT 9303).